Reading from the N-terminus, the 104-residue chain is Pyrimidine/purine nucleoside phosphorylase (104 aa).

The protein belongs to the nucleoside phosphorylase PpnP family.

The enzyme catalyses a purine D-ribonucleoside + phosphate = a purine nucleobase + alpha-D-ribose 1-phosphate. It catalyses the reaction adenosine + phosphate = alpha-D-ribose 1-phosphate + adenine. The catalysed reaction is cytidine + phosphate = cytosine + alpha-D-ribose 1-phosphate. It carries out the reaction guanosine + phosphate = alpha-D-ribose 1-phosphate + guanine. The enzyme catalyses inosine + phosphate = alpha-D-ribose 1-phosphate + hypoxanthine. It catalyses the reaction thymidine + phosphate = 2-deoxy-alpha-D-ribose 1-phosphate + thymine. The catalysed reaction is uridine + phosphate = alpha-D-ribose 1-phosphate + uracil. It carries out the reaction xanthosine + phosphate = alpha-D-ribose 1-phosphate + xanthine. In terms of biological role, catalyzes the phosphorolysis of diverse nucleosides, yielding D-ribose 1-phosphate and the respective free bases. Can use uridine, adenosine, guanosine, cytidine, thymidine, inosine and xanthosine as substrates. Also catalyzes the reverse reactions. This Thiobacillus denitrificans (strain ATCC 25259 / T1) protein is Pyrimidine/purine nucleoside phosphorylase.